Here is a 72-residue protein sequence, read N- to C-terminus: Translation initiation factor IF-1 (72 aa).

In terms of domain architecture, S1-like spans 1-72 (MAKEEVLEFP…TKGRITYRLK (72 aa)).

Belongs to the IF-1 family. In terms of assembly, component of the 30S ribosomal translation pre-initiation complex which assembles on the 30S ribosome in the order IF-2 and IF-3, IF-1 and N-formylmethionyl-tRNA(fMet); mRNA recruitment can occur at any time during PIC assembly.

Its subcellular location is the cytoplasm. One of the essential components for the initiation of protein synthesis. Stabilizes the binding of IF-2 and IF-3 on the 30S subunit to which N-formylmethionyl-tRNA(fMet) subsequently binds. Helps modulate mRNA selection, yielding the 30S pre-initiation complex (PIC). Upon addition of the 50S ribosomal subunit IF-1, IF-2 and IF-3 are released leaving the mature 70S translation initiation complex. This chain is Translation initiation factor IF-1, found in Brucella suis biovar 1 (strain 1330).